We begin with the raw amino-acid sequence, 215 residues long: MPTANQLIRHGREEKRRTDRTEVLVFGLLVTRIIRFVHSVLFPIPVFCSIKVLLDYFCSLPIIDKLSKKWQLIWFYVLSVILCKSLFAVGYLWMDDLSRAISQFYPVVSGGLGGGNTPMPPTNPSEGGLLEGYYAHENEHSHDQQRGSPFWSKEYKESGSKRLFLNLEVEDQNTDTIGEQVKAESGKCEKIKAKIIAKTHELLVSEDTKFQIKTI.

Helical transmembrane passes span 40–60 and 72–92; these read VLFP…FCSL and LIWF…VGYL.

It localises to the mitochondrion membrane. This is an uncharacterized protein from Arabidopsis thaliana (Mouse-ear cress).